The sequence spans 130 residues: Large ribosomal subunit protein bL19 (130 aa).

Belongs to the bacterial ribosomal protein bL19 family.

In terms of biological role, this protein is located at the 30S-50S ribosomal subunit interface and may play a role in the structure and function of the aminoacyl-tRNA binding site. This is Large ribosomal subunit protein bL19 from Burkholderia lata (strain ATCC 17760 / DSM 23089 / LMG 22485 / NCIMB 9086 / R18194 / 383).